Reading from the N-terminus, the 132-residue chain is Putative RNase AF_2433 (132 aa).

Active-site residues include Arg90 and His95. Positions 90–97 (RNWLVHRY) match the RX(4)HXY motif motif. Position 97 is an O-di-AMP-tyrosine (Tyr97).

Belongs to the HepT RNase toxin family. Homodimer, probably forms a complex with cognate antitoxin AF_2432. Post-translationally, modified by cognate antitoxin AF_2432; probably at least 2 successive AMPylation events occur on Tyr-97.

In terms of biological role, probable toxic component of a putative type VII toxin-antitoxin (TA) system, probably an RNase. Probably neutralized by cognate antitoxin AF_2432. Neutralization may be due to AMPylation by AF_2432. This Archaeoglobus fulgidus (strain ATCC 49558 / DSM 4304 / JCM 9628 / NBRC 100126 / VC-16) protein is Putative RNase AF_2433.